The sequence spans 178 residues: Beta-lactoglobulin-1A/1C (178 aa).

A signal peptide spans 1–18 (MRCLLLTLGLALLCGVQA). 2 disulfides stabilise this stretch: cysteine 84/cysteine 176 and cysteine 124/cysteine 137.

Belongs to the calycin superfamily. Lipocalin family. In terms of assembly, under physiological conditions beta-lactoglobulin exists as an equilibrium mixture of monomeric and dimeric forms.

It is found in the secreted. Functionally, lactoglobulin is the primary component of whey, it binds retinol and is probably involved in the transport of that molecule. In Sus scrofa (Pig), this protein is Beta-lactoglobulin-1A/1C.